Here is a 481-residue protein sequence, read N- to C-terminus: OTU domain-containing protein 1 (481 aa).

2 disordered regions span residues 18–60 (PTAA…AAAE) and 202–282 (LAAA…IVSR). Positions 38–58 (PPGAAGAAPEPETGECQPAAA) are enriched in low complexity. The segment covering 225 to 257 (GEEHLAERGPRGWERGGDRCDAPGGDAARRPDP) has biased composition (basic and acidic residues). Over residues 261-281 (APPAGSIEAAPSSAAEPVIVS) the composition is skewed to low complexity. An OTU domain is found at 309-438 (KYRFHIIPDG…NGHYDAVFDH (130 aa)). The tract at residues 314 to 320 (IIPDGNC) is cys-loop. The active site involves Asp-317. Cys-320 functions as the Nucleophile in the catalytic mechanism. Positions 369–379 (AAQDGAWAGYP) are his-loop. Positions 426–431 (WLSNGH) are variable-loop. Residue His-431 is part of the active site. In terms of domain architecture, UIM spans 457 to 476 (KRDEELAKSMAISLSKMYIE).

The catalysed reaction is Thiol-dependent hydrolysis of ester, thioester, amide, peptide and isopeptide bonds formed by the C-terminal Gly of ubiquitin (a 76-residue protein attached to proteins as an intracellular targeting signal).. Functionally, deubiquitinating enzyme that specifically hydrolyzes 'Lys-63'-linked polyubiquitin to monoubiquitin. Required for the stability and translation of a subset mRNAs with a high abundance of rare codons by mediating deubiquitination of 40S ribosomal protein RPS10/eS10, thereby antagonizing ZNF598-mediated 40S ubiquitination. The abundance of rare codons in mRNAs can limit the translation rate and can lead to ribosome collisions that trigger activation of ribosome quality control (RQC) pathway by ZNF598. OTUD1-mediated deubiquitination prevents activation of the RQC and subsequent dissociation of ribosomes and stimulates formation of polysomes and translation. This is OTU domain-containing protein 1 from Homo sapiens (Human).